The sequence spans 874 residues: MSTDRYNARDAEPRWQAIWNERGIFRTRNDDPRPKFFVMEMFPYPSGRIHIGHGRNYVMGDVLARYKRMQGFNVLHPMGWDSFGLPAENAAIERGIHPKSWTYENIASMKEQLQLLGLSLDWNREVATCDPSYYAEQQRLFLDLFENDLAYRKESEVNWDPVDNTVLANEQVIDGRGWRSGAVVERRKLNQWFFRITAFAQELLDAIDTLDRWPDKVRLMQRNWIGRSEGLEVLFELSKGSVAAAGTSAVKVYTTRPDTLFGASFLALSPDHPLTQHLAATRPDLAAFVADCKTGGTSAEAIETQEKKGFDTGLTVVHPLDAARTVPVYVANFVLMDYGTGAIFGCPAHDQRDLDFARKYGLTVTPVVLPPGADPAVFAVGSEAYDGEGTLYNSQFLDGLSIADAKEQVARRLERFRVGEQPQGTRKVNFRLRDWGISRQRYWGCPIPIIHCDSCGPVAVPREQLPVELPDDVTFDRPGNPLDRAKAWRDVPCPKCGAPARRETDTMDTFVDSSWYFLRYASDNPDKPLDKDAVRHWLPVDQYIGGIEHAILHLLYSRFFTRALKACGRVDVAEPFAGLFTQGMIVHETYKDKDGRWLFPEEVKLLGDGKAEKLDDGSPVTVGPPEKMSKSKKNVVPPEVVVDTYGVDAGRWFMLSDTPPERDSEWTQSGIEGAWRFVQRVWRQVQEAIELGAPKGADKPASFDAAATALRRAAHGLAHQVADDVERLRFNVAVAHVHEFANAFGQAIASARTASPVPADLAFALREAAEIVTRVVGPMVPHLAEECWAALGYDTLLAEAAWPKAEPELLVENTITLPIQINGKKRDDITVPRDATAAEVEAAVLEMESVRRALDGKAPKRIIVVPQRIVNVVA.

Positions 43–53 (PYPSGRIHIGH) match the 'HIGH' region motif. The interval 614–634 (LDDGSPVTVGPPEKMSKSKKN) is disordered. Positions 627–631 (KMSKS) match the 'KMSKS' region motif. An ATP-binding site is contributed by K630.

This sequence belongs to the class-I aminoacyl-tRNA synthetase family.

It localises to the cytoplasm. The catalysed reaction is tRNA(Leu) + L-leucine + ATP = L-leucyl-tRNA(Leu) + AMP + diphosphate. This chain is Leucine--tRNA ligase, found in Azorhizobium caulinodans (strain ATCC 43989 / DSM 5975 / JCM 20966 / LMG 6465 / NBRC 14845 / NCIMB 13405 / ORS 571).